Reading from the N-terminus, the 396-residue chain is ATP-dependent RNA helicase eIF4A (396 aa).

Residues 22–50 (YSFDDLNLKPNIVRGIFGYGYESPSAIQQ) carry the Q motif motif. The Helicase ATP-binding domain maps to 53–223 (ILPITEGRDV…TKFMNNPVRI (171 aa)). 66-73 (AQSGTGKT) is a binding site for ATP. The short motif at 171 to 174 (DEAD) is the DEAD box element. Residues 234-395 (GIKQFYINVE…EMPANIGELF (162 aa)) enclose the Helicase C-terminal domain.

The protein belongs to the DEAD box helicase family. eIF4A subfamily. As to quaternary structure, component of the eIF4F complex, which composition varies with external and internal environmental conditions. It is composed of at least eIF4A, eIF4E and eIF4G.

It localises to the cytoplasm. It catalyses the reaction ATP + H2O = ADP + phosphate + H(+). Functionally, ATP-dependent RNA helicase which is a subunit of the eIF4F complex involved in cap recognition and is required for mRNA binding to ribosome. In the current model of translation initiation, eIF4A unwinds RNA secondary structures in the 5'-UTR of mRNAs which is necessary to allow efficient binding of the small ribosomal subunit, and subsequent scanning for the initiator codon. This Meyerozyma guilliermondii (strain ATCC 6260 / CBS 566 / DSM 6381 / JCM 1539 / NBRC 10279 / NRRL Y-324) (Yeast) protein is ATP-dependent RNA helicase eIF4A (TIF1).